We begin with the raw amino-acid sequence, 273 residues long: SPRY domain-containing SOCS box protein 1 (273 aa).

Phosphotyrosine; by MET is present on Y31. The 199-residue stretch at 33 to 231 (KPTRLDLLLD…IRMRYLNGLD (199 aa)) folds into the B30.2/SPRY domain. The SOCS box domain occupies 232–273 (PEPLPLMDLCRRSVRLALGRERLGEIHTLPLPASLKAYLLYQ).

It belongs to the SPSB family. Component of the probable ECS(SPSB1) E3 ubiquitin-protein ligase complex which contains CUL5, RNF7/RBX2, Elongin BC complex and SPSB1. Interacts with CUL5, RNF7, ELOB and ELOC. Directly interacts with MET tyrosine kinase domain in the presence and in the absence of HGF, however HGF treatment has a positive effect on this interaction. When phosphorylated, interacts with RASA1 without affecting its stability. Interacts (via B30.2/SPRY domain) with PAWR; this interaction is direct and occurs in association with the Elongin BC complex. Interacts with NOS2. Interacts with EPHB2.

Its subcellular location is the cytoplasm. The protein resides in the cytosol. The protein operates within protein modification; protein ubiquitination. Substrate recognition component of a SCF-like ECS (Elongin BC-CUL2/5-SOCS-box protein) E3 ubiquitin-protein ligase complex which mediates the ubiquitination and subsequent proteasomal degradation of target proteins. Negatively regulates nitric oxide (NO) production and limits cellular toxicity in activated macrophages by mediating the ubiquitination and proteasomal degradation of NOS2. Acts as a bridge which links NOS2 with the ECS E3 ubiquitin ligase complex components ELOC and CUL5. The polypeptide is SPRY domain-containing SOCS box protein 1 (SPSB1) (Homo sapiens (Human)).